A 208-amino-acid polypeptide reads, in one-letter code: FMN-dependent NADH:quinone oxidoreductase (208 aa).

FMN is bound by residues 17 to 19, 99 to 102, and 143 to 146; these read SNS, MWNL, and SRGG.

Belongs to the azoreductase type 1 family. As to quaternary structure, homodimer. It depends on FMN as a cofactor.

The catalysed reaction is 2 a quinone + NADH + H(+) = 2 a 1,4-benzosemiquinone + NAD(+). The enzyme catalyses N,N-dimethyl-1,4-phenylenediamine + anthranilate + 2 NAD(+) = 2-(4-dimethylaminophenyl)diazenylbenzoate + 2 NADH + 2 H(+). In terms of biological role, quinone reductase that provides resistance to thiol-specific stress caused by electrophilic quinones. Functionally, also exhibits azoreductase activity. Catalyzes the reductive cleavage of the azo bond in aromatic azo compounds to the corresponding amines. This Staphylococcus aureus (strain MSSA476) protein is FMN-dependent NADH:quinone oxidoreductase.